A 147-amino-acid chain; its full sequence is Large ribosomal subunit protein uL16c (147 aa).

The segment covering 1 to 17 (MLSPKRTRFRKQHRGRM) has biased composition (basic residues). The tract at residues 1 to 20 (MLSPKRTRFRKQHRGRMKGI) is disordered.

Belongs to the universal ribosomal protein uL16 family. In terms of assembly, part of the 50S ribosomal subunit.

It is found in the plastid. The protein localises to the chloroplast. In Ipomoea purpurea (Common morning glory), this protein is Large ribosomal subunit protein uL16c.